The following is a 438-amino-acid chain: Putative F-box/FBD/LRR-repeat protein At5g44950 (438 aa).

Positions 3–49 (RDRISELPDGLLNHILMYLHIEESIRTSVLSSRWRKLWLKVPGLDVN) constitute an F-box domain. 2 LRR repeats span residues 246–275 (LSSL…DLTK) and 286–310 (ISSV…KIGQ). Residues 355-407 (PEQIDFTNLPRCLISTLEYVEIKQLTMREESGIKLVKYFLENSAVLKKLTLSF) form the FBD domain.

The chain is Putative F-box/FBD/LRR-repeat protein At5g44950 from Arabidopsis thaliana (Mouse-ear cress).